A 121-amino-acid polypeptide reads, in one-letter code: Probable K(+)/H(+) antiporter subunit G (121 aa).

Helical transmembrane passes span 10-32, 45-67, and 72-94; these read WAAL…GSLG, APTI…CFAV, and WVFH…LMLL.

The protein belongs to the CPA3 antiporters (TC 2.A.63) subunit G family. May form a hetero-oligomeric complex that consists of six subunits: PhaAB, PhaC, PhaD, PhaE, PhaF and PhaG.

The protein resides in the cell membrane. Part of a K(+) efflux system which is required for the adaptation of R.meliloti to alkaline pH as well as for the infection process during symbiotic nodule development. The polypeptide is Probable K(+)/H(+) antiporter subunit G (phaG) (Rhizobium meliloti (strain 1021) (Ensifer meliloti)).